The sequence spans 712 residues: Polyribonucleotide nucleotidyltransferase (712 aa).

2 residues coordinate Mg(2+): Asp485 and Asp491. The KH domain maps to 552–611 (PRIHTMKIDPKKIKDVIGKGGAVIRSLTEETGTSIDIDDDGTVKIAATDNNAAKMVMSRI). The S1 motif domain maps to 621–689 (NAIYTGKVSR…RQNRIRLTMK (69 aa)).

This sequence belongs to the polyribonucleotide nucleotidyltransferase family. Component of the RNA degradosome, which is a multiprotein complex involved in RNA processing and mRNA degradation. Mg(2+) serves as cofactor.

It is found in the cytoplasm. The enzyme catalyses RNA(n+1) + phosphate = RNA(n) + a ribonucleoside 5'-diphosphate. In terms of biological role, involved in mRNA degradation. Catalyzes the phosphorolysis of single-stranded polyribonucleotides processively in the 3'- to 5'-direction. The protein is Polyribonucleotide nucleotidyltransferase of Haemophilus ducreyi (strain 35000HP / ATCC 700724).